We begin with the raw amino-acid sequence, 229 residues long: Protein MC132 (229 aa).

As to quaternary structure, interacts with host RELA (via RHD domain), ELOB, ELOC and CUL5; these interactions induce the proteasomal degradation of host RELA.

The protein localises to the host cytoplasm. Its function is as follows. Inhibits host NF-kappa-B activation stimulated by IL-1 and multiple PRR viral detection pathways. Targets host NF-kappa-B component RELA/p65 for ubiquitin-dependent proteasomal degradation. In Homo sapiens (Human), this protein is Protein MC132 (MC132).